A 481-amino-acid polypeptide reads, in one-letter code: Proline--tRNA ligase (481 aa).

Belongs to the class-II aminoacyl-tRNA synthetase family. ProS type 3 subfamily. In terms of assembly, homodimer.

The protein localises to the cytoplasm. The catalysed reaction is tRNA(Pro) + L-proline + ATP = L-prolyl-tRNA(Pro) + AMP + diphosphate. Functionally, catalyzes the attachment of proline to tRNA(Pro) in a two-step reaction: proline is first activated by ATP to form Pro-AMP and then transferred to the acceptor end of tRNA(Pro). This chain is Proline--tRNA ligase, found in Chlorobium phaeobacteroides (strain BS1).